Consider the following 255-residue polypeptide: Ribonuclease HII (255 aa).

The 184-residue stretch at R72–I255 folds into the RNase H type-2 domain. A divalent metal cation is bound by residues D78, E79, and D170.

It belongs to the RNase HII family. Mn(2+) is required as a cofactor. It depends on Mg(2+) as a cofactor.

The protein resides in the cytoplasm. It carries out the reaction Endonucleolytic cleavage to 5'-phosphomonoester.. In terms of biological role, endonuclease that specifically degrades the RNA of RNA-DNA hybrids. The polypeptide is Ribonuclease HII (Enterococcus faecalis (strain ATCC 700802 / V583)).